The primary structure comprises 449 residues: Wilms tumor protein (449 aa).

The disordered stretch occupies residues 48–84; it reads YGSLGGPAPPPAPPPPPPPPPHSFIKQEPSWGGAEPH. Pro residues predominate over residues 54–69; that stretch reads PAPPPAPPPPPPPPPH. Residues K73 and K177 each participate in a glycyl lysine isopeptide (Lys-Gly) (interchain with G-Cter in SUMO) cross-link. The 9aaTAD motif lies at 236–244; sequence MTWNQMNLG. C2H2-type zinc fingers lie at residues 323 to 347, 353 to 377, and 383 to 405; these read FMCA…SRKH, YQCD…QRRH, and FQCK…TRTH. Important for interaction with target DNA stretches follow at residues 367-381 and 393-401; these read SDQL…TGVK and SRSDHLKTH. The KTS motif motif lies at 408–410; sequence KTS. Residues 414 to 438 form a C2H2-type 4 zinc finger; it reads FSCRWPSCQKKFARSDELVRHHNMH. K444 participates in a covalent cross-link: Glycyl lysine isopeptide (Lys-Gly) (interchain with G-Cter in SUMO2).

The protein belongs to the EGR C2H2-type zinc-finger protein family. Homodimer. Interacts with WTIP. Interacts with actively translating polysomes. Detected in nuclear ribonucleoprotein (mRNP) particles. Interacts with HNRNPU via the zinc-finger region. Interacts with U2AF2. Interacts with CITED2. Interacts with ZNF224 via the zinc-finger region. Interacts with WTAP and SRY. Interacts with AMER1. Interacts with RBM4. In terms of tissue distribution, expressed in the kidney and a subset of hematopoietic cells.

It localises to the nucleus. It is found in the nucleolus. Its subcellular location is the cytoplasm. The protein localises to the nucleus speckle. The protein resides in the nucleoplasm. Its function is as follows. Transcription factor that plays an important role in cellular development and cell survival. Recognizes and binds to the DNA sequence 5'-GCG(T/G)GGGCG-3'. Regulates the expression of numerous target genes, including EPO. Plays an essential role for development of the urogenital system. It has a tumor suppressor as well as an oncogenic role in tumor formation. Function may be isoform-specific: isoforms lacking the KTS motif may act as transcription factors. Isoforms containing the KTS motif may bind mRNA and play a role in mRNA metabolism or splicing. Isoform 1 has lower affinity for DNA, and can bind RNA. The polypeptide is Wilms tumor protein (WT1) (Homo sapiens (Human)).